The following is a 2849-amino-acid chain: Polycystin-1-like protein 1 (2849 aa).

The Extracellular segment spans residues 1-1748 (MAEEAAQNIS…SDISKLQSHP (1748 aa)). N-linked (GlcNAc...) asparagine glycosylation is found at Asn8, Asn295, Asn338, Asn376, Asn447, Asn482, Asn514, Asn605, Asn657, Asn751, Asn875, Asn926, and Asn937. PKD domains lie at 508 to 590 (SVSV…VQKK) and 592 to 673 (VANR…VCEP). The 898-residue stretch at 674-1571 (CQPPLVKNMG…GEEDGLDNRR (898 aa)) folds into the REJ domain. Positions 970-987 (NLLPTEPGTADPDATTTP) are enriched in low complexity. Disordered regions lie at residues 970 to 1068 (NLLP…PHLS) and 1081 to 1118 (IPSG…DPSL). The span at 1053–1068 (RSERSQPTHSPDPHLS) shows a compositional bias: basic and acidic residues. 6 N-linked (GlcNAc...) asparagine glycosylation sites follow: Asn1233, Asn1301, Asn1306, Asn1572, Asn1681, and Asn1716. The GAIN-B domain maps to 1587–1735 (QFTELSENPQ…ALLRRKLKAS (149 aa)). An intrachain disulfide couples Cys1691 to Cys1717. Residues 1691–1735 (CLFWDKREWKSERFSPQPGTSPEKVNCSYHRLAAFALLRRKLKAS) form a GPS region. A helical membrane pass occupies residues 1749-1769 (ENLLPSIFIMGSVILYGFLVA). Residues 1770 to 1956 (KSRQVDHHEK…SSSRYLHTPR (187 aa)) are Cytoplasmic-facing. A PLAT domain is found at 1796–1913 (QLYAVVIDTG…HDGRVERELT (118 aa)). The chain crosses the membrane as a helical span at residues 1957 to 1977 (LTVSFSLLCVYACLTALVAAG). The Extracellular segment spans residues 1978–1992 (GQEQPHLDVSPTLGS). Residues 1993–2013 (FRVGLLCTLLASPGAQLLSLL) traverse the membrane as a helical segment. Over 2014–2135 (FRLSKEAPGS…SRALQPWWSS (122 aa)) the chain is Cytoplasmic. The disordered stretch occupies residues 2023–2089 (SARVEPHSPL…GTACPAPKLQ (67 aa)). Residues 2136-2156 (AVWAICGTASLACSLGTGFLA) form a helical membrane-spanning segment. Topologically, residues 2157 to 2174 (YRFGQEQCVQWLHLLSLS) are extracellular. The chain crosses the membrane as a helical span at residues 2175-2195 (VVCCIFITQPLMVCLMALGFA). At 2196–2281 (WKRRADNHFF…QRMRRESRTR (86 aa)) the chain is on the cytoplasmic side. Residues 2282 to 2302 (AALRDISMDILMLLLLLCVIY) form a helical membrane-spanning segment. The Extracellular portion of the chain corresponds to 2303–2522 (GRFSQDEYSL…FRSDSALQYH (220 aa)). N-linked (GlcNAc...) asparagine glycosylation is present at Asn2426. A helical membrane pass occupies residues 2523-2543 (LMLPQLVFLALSLIHLCVQLY). Residues 2544 to 2562 (RMMDKGVLSYWRKPRNWLE) are Cytoplasmic-facing. A helical membrane pass occupies residues 2563 to 2583 (LSVVGVSLTYYAVSGHLVTLA). Residues 2584–2616 (GDVTNQFHRGLCRAFMDLTLMASWNQRARWLRG) lie on the Extracellular side of the membrane. Residues 2617-2637 (ILLFLFTLKCVYLPGIQNTMA) form a helical membrane-spanning segment. Residues 2638–2646 (SCSSMMRHS) are Cytoplasmic-facing. The chain crosses the membrane as a helical span at residues 2647–2667 (LPSIFVAGLVGALMLAALSHL). Residues 2668 to 2711 (HRFLLSMWVLPPGTFTDAFPGLLFHFPRRSQKDCLLGLSKSDQR) lie on the Extracellular side of the membrane. A helical membrane pass occupies residues 2712 to 2732 (AMACYFGILLIVSATLCFGML). Topologically, residues 2733–2849 (RGFLMTLPQK…AAEPADIKDF (117 aa)) are cytoplasmic.

It belongs to the polycystin family. Heterodimer. Interacts with PKD2 to form a calcium channel. Interacts with PKD2L1; to form ciliary calcium channel. May interact with GNA12, GNAS, GNAI1 and GNAI2. In terms of tissue distribution, detected in testis and in fetal and adult heart.

It localises to the cell projection. The protein localises to the cilium membrane. In terms of biological role, component of a calcium-permeant ion channel formed by PKD1L2 and PKD1L1 in primary cilia, where it controls cilium calcium concentration, without affecting cytoplasmic calcium concentration, and regulates sonic hedgehog/SHH signaling and GLI2 transcription. The PKD1L1:PKD2L1 channel complex is mechanosensitive only at high pressures and is highly temperature sensitive. Also involved in left/right axis specification downstream of nodal flow by forming a complex with PKD2 in cilia to facilitate flow detection in left/right patterning. May function as a G-protein-coupled receptor. The protein is Polycystin-1-like protein 1 of Homo sapiens (Human).